The sequence spans 101 residues: Peroxisomal biogenesis factor 39 (101 aa).

Its subcellular location is the peroxisome. Functionally, may be a peroxin involved in the PTS2-mediated protein import pathway. This chain is Peroxisomal biogenesis factor 39, found in Homo sapiens (Human).